The chain runs to 355 residues: NADH-quinone oxidoreductase subunit H (355 aa).

Transmembrane regions (helical) follow at residues 25-45, 91-111, 126-146, 170-190, 205-225, 253-273, 290-310, and 330-350; these read VVRILVVSVVILLCVAYLILW, WLYLIAPIMTVVPAFAVWAVI, LLYAMAISSIGVYAVILAGWA, MGFALVLVLMTAGSLNLSEIV, FLSWNWLPLLPAFVVYFISGI, MAFALFFLAEYINMIVISALA, FIPGIFWLVLKVFALLSVFIW, and VFLPVTVIWVVVVGCWMMSPL.

Belongs to the complex I subunit 1 family. As to quaternary structure, NDH-1 is composed of 14 different subunits. Subunits NuoA, H, J, K, L, M, N constitute the membrane sector of the complex.

The protein localises to the cell inner membrane. The catalysed reaction is a quinone + NADH + 5 H(+)(in) = a quinol + NAD(+) + 4 H(+)(out). Its function is as follows. NDH-1 shuttles electrons from NADH, via FMN and iron-sulfur (Fe-S) centers, to quinones in the respiratory chain. The immediate electron acceptor for the enzyme in this species is believed to be ubiquinone. Couples the redox reaction to proton translocation (for every two electrons transferred, four hydrogen ions are translocated across the cytoplasmic membrane), and thus conserves the redox energy in a proton gradient. This subunit may bind ubiquinone. This Burkholderia cenocepacia (strain ATCC BAA-245 / DSM 16553 / LMG 16656 / NCTC 13227 / J2315 / CF5610) (Burkholderia cepacia (strain J2315)) protein is NADH-quinone oxidoreductase subunit H.